The sequence spans 272 residues: MKGAGSASFLLTLLSTITRTSAHGYVSNIVINGVSYRGWLPSQDPYSPSPPIGVGWETPNLSNGFVTPEEASTDAIICHKEATPARGHATVAAGDKIYIQWQPIPWPDSHHGPVLDYLAPCNGDCQTVDKNSLEFFKISGVGLIDGSSPPGYWADDELIENGNGWLVQIPADIKPGNYVLRHEIIALHGAGSQNGAQLYPQCFNLKITGSGTAEPAGVPGPELYSPTDPGILINIYQVLTDYVVPGPTPIPQAVEVAQSSSVITATGTPTPV.

A signal peptide spans 1 to 22 (MKGAGSASFLLTLLSTITRTSA). His-23 contacts Cu(2+). The N-linked (GlcNAc...) asparagine glycan is linked to Asn-60. 2 cysteine pairs are disulfide-bonded: Cys-78/Cys-202 and Cys-121/Cys-125. Position 110 (His-110) interacts with Cu(2+). Residues His-188 and Gln-197 each contribute to the O2 site. Tyr-199 is a binding site for Cu(2+).

The protein belongs to the polysaccharide monooxygenase AA9 family. The cofactor is Cu(2+).

Its subcellular location is the secreted. The enzyme catalyses [(1-&gt;4)-beta-D-glucosyl]n+m + reduced acceptor + O2 = 4-dehydro-beta-D-glucosyl-[(1-&gt;4)-beta-D-glucosyl]n-1 + [(1-&gt;4)-beta-D-glucosyl]m + acceptor + H2O.. In terms of biological role, lytic polysaccharide monooxygenase (LPMO) that depolymerizes crystalline and amorphous polysaccharides via the oxidation of scissile alpha- or beta-(1-4)-glycosidic bonds, yielding C1 or C4 oxidation products. Catalysis by LPMOs requires the reduction of the active-site copper from Cu(II) to Cu(I) by a reducing agent and H(2)O(2) or O(2) as a cosubstrate. Acts preferentially on crystalline regions of cellulose such as highly crystalline algae cellulose. The sequence is that of AA9 family lytic polysaccharide monooxygenase G from Emericella nidulans (strain FGSC A4 / ATCC 38163 / CBS 112.46 / NRRL 194 / M139) (Aspergillus nidulans).